A 216-amino-acid chain; its full sequence is MPSFADLTTENGLVELNKFVSDKTYIVGFVPSSADVQAFNLVKTAPCATKYPHAARWFNTIASYSAAEQGQFEKVTETVTIAAPAAPKADDDVDLFGSDDEDDEEYERQLEERRKKAMEHKKPKETVIAKSSILLDVKPWDDETDMVELEKCVRSIEMDGLVWGASKLVAVGYGIKKLVINLVVEDLKVSTDELEEKIKDFEDYVQSVDVAAFNKI.

Belongs to the EF-1-beta/EF-1-delta family. EF-1 is composed of 4 subunits: alpha, beta, delta, and gamma. Interacts with actin.

Its subcellular location is the cytoplasm. In terms of biological role, EF-1-beta and EF-1-delta stimulate the exchange of GDP bound to EF-1-alpha to GTP. The polypeptide is Elongation factor 1-beta (efa1B) (Dictyostelium discoideum (Social amoeba)).